Reading from the N-terminus, the 283-residue chain is Shikimate dehydrogenase (NADP(+)) (283 aa).

Shikimate is bound by residues 22 to 24 and Thr69; that span reads SRS. Lys73 (proton acceptor) is an active-site residue. The shikimate site is built by Asn93 and Asp108. Residues 133 to 137 and Leu222 each bind NADP(+); that span reads GAGGS. Residue Tyr224 coordinates shikimate. NADP(+) is bound at residue Gly245.

It belongs to the shikimate dehydrogenase family. As to quaternary structure, homodimer.

It carries out the reaction shikimate + NADP(+) = 3-dehydroshikimate + NADPH + H(+). It participates in metabolic intermediate biosynthesis; chorismate biosynthesis; chorismate from D-erythrose 4-phosphate and phosphoenolpyruvate: step 4/7. Its function is as follows. Involved in the biosynthesis of the chorismate, which leads to the biosynthesis of aromatic amino acids. Catalyzes the reversible NADPH linked reduction of 3-dehydroshikimate (DHSA) to yield shikimate (SA). This Rhodopseudomonas palustris (strain BisB5) protein is Shikimate dehydrogenase (NADP(+)).